Here is a 512-residue protein sequence, read N- to C-terminus: Histidine ammonia-lyase (512 aa).

The 5-imidazolinone (Ala-Gly) cross-link spans 145-147 (ASG). Ser146 is modified (2,3-didehydroalanine (Ser)).

The protein belongs to the PAL/histidase family. Post-translationally, contains an active site 4-methylidene-imidazol-5-one (MIO), which is formed autocatalytically by cyclization and dehydration of residues Ala-Ser-Gly.

It localises to the cytoplasm. It catalyses the reaction L-histidine = trans-urocanate + NH4(+). It participates in amino-acid degradation; L-histidine degradation into L-glutamate; N-formimidoyl-L-glutamate from L-histidine: step 1/3. The protein is Histidine ammonia-lyase of Pseudomonas fluorescens (strain SBW25).